Here is a 454-residue protein sequence, read N- to C-terminus: Protein translocase subunit SecY (454 aa).

Helical transmembrane passes span 43–63, 97–117, 144–164, 168–188, 201–221, 226–246, 289–309, 334–354, 390–410, and 414–434; these read LTIALLVFIIKIGMAIPLPYI, FTLGITPSINASIILQLAFVI, TLLLAITQSVFLIFSLRAFIF, ILKLFELSCVLSSGAMIILWI, SSFLIFLNIVSVLPEQIGMSF, IFSFEGLIVILTFSITVWAAI, PVVFASYLIPILKTGGIYILL, IVEAGLICLFALFYSGLIIDP, LIGALILAFNVVLLNLVGFVF, and IFKGFSIGSQIILLGVVTEIL.

This sequence belongs to the SecY/SEC61-alpha family. As to quaternary structure, component of the plastid Sec protein translocase complex, which is composed of at least SecY and SecE.

The protein resides in the plastid. It is found in the chloroplast thylakoid membrane. The central subunit of the protein translocation channel SecYE. Consists of two halves formed by TMs 1-5 and 6-10. These two domains form a lateral gate at the front which open onto the bilayer between TMs 2 and 7, and are clamped together by SecE at the back. The channel is closed by both a pore ring composed of hydrophobic SecY resides and a short helix (helix 2A) on the extracellular side of the membrane which forms a plug. This is Protein translocase subunit SecY from Heterosigma akashiwo (strain NIES-293 / 8280G21-1).